The sequence spans 244 residues: Transcriptional activator protein anr (244 aa).

Residue 21–149 (APLCLPLSLT…RLMSREIRDD (129 aa)) coordinates a nucleoside 3',5'-cyclic phosphate. Positions 159-232 (KTADERIATF…GKEVHILDSI (74 aa)) constitute an HTH crp-type domain. Residues 192 to 211 (RNEIGNYLGLAVETVSRVFT) constitute a DNA-binding region (H-T-H motif).

Functionally, transcriptional activator of anaerobic gene expression. This chain is Transcriptional activator protein anr (anr), found in Pseudomonas aeruginosa (strain ATCC 15692 / DSM 22644 / CIP 104116 / JCM 14847 / LMG 12228 / 1C / PRS 101 / PAO1).